The primary structure comprises 395 residues: Flap endonuclease 1 (395 aa).

The segment at 1-104 (MGIKHLYQII…GELAKRFMRK (104 aa)) is N-domain. Asp34 lines the Mg(2+) pocket. The DNA site is built by Arg47 and Arg70. Residues Asp86, Glu158, Glu160, Asp179, and Asp181 each contribute to the Mg(2+) site. Residues 122–253 (EVEKFSRRTV…NTALKLIRDH (132 aa)) are I-domain. Position 158 (Glu158) interacts with DNA. Gly231 and Asp233 together coordinate DNA. Asp233 provides a ligand contact to Mg(2+). The segment at 341–349 (QQSRLEGFF) is interaction with PCNA. The span at 360-389 (AVLKRKHEEKLELQKKKKKEDAKAKKEAKS) shows a compositional bias: basic and acidic residues. A disordered region spans residues 360–395 (AVLKRKHEEKLELQKKKKKEDAKAKKEAKSKPRGTT).

It belongs to the XPG/RAD2 endonuclease family. FEN1 subfamily. As to quaternary structure, interacts with PCNA. Three molecules of FEN1 bind to one PCNA trimer with each molecule binding to one PCNA monomer. PCNA stimulates the nuclease activity without altering cleavage specificity. Requires Mg(2+) as cofactor. Post-translationally, phosphorylated. Phosphorylation upon DNA damage induces relocalization to the nuclear plasma.

Its subcellular location is the nucleus. The protein localises to the nucleolus. It localises to the nucleoplasm. The protein resides in the mitochondrion. Functionally, structure-specific nuclease with 5'-flap endonuclease and 5'-3' exonuclease activities involved in DNA replication and repair. During DNA replication, cleaves the 5'-overhanging flap structure that is generated by displacement synthesis when DNA polymerase encounters the 5'-end of a downstream Okazaki fragment. It enters the flap from the 5'-end and then tracks to cleave the flap base, leaving a nick for ligation. Also involved in the long patch base excision repair (LP-BER) pathway, by cleaving within the apurinic/apyrimidinic (AP) site-terminated flap. Acts as a genome stabilization factor that prevents flaps from equilibrating into structures that lead to duplications and deletions. Also possesses 5'-3' exonuclease activity on nicked or gapped double-stranded DNA, and exhibits RNase H activity. Also involved in replication and repair of rDNA and in repairing mitochondrial DNA. This Ajellomyces capsulatus (strain NAm1 / WU24) (Darling's disease fungus) protein is Flap endonuclease 1.